Here is a 431-residue protein sequence, read N- to C-terminus: Glutamate-1-semialdehyde 2,1-aminomutase (431 aa).

N6-(pyridoxal phosphate)lysine is present on K269.

Belongs to the class-III pyridoxal-phosphate-dependent aminotransferase family. HemL subfamily. Homodimer. Pyridoxal 5'-phosphate is required as a cofactor.

Its subcellular location is the cytoplasm. It catalyses the reaction (S)-4-amino-5-oxopentanoate = 5-aminolevulinate. The protein operates within porphyrin-containing compound metabolism; protoporphyrin-IX biosynthesis; 5-aminolevulinate from L-glutamyl-tRNA(Glu): step 2/2. In Francisella tularensis subsp. holarctica (strain LVS), this protein is Glutamate-1-semialdehyde 2,1-aminomutase.